A 372-amino-acid chain; its full sequence is MSTAALITLVRSGGNQVRRRVLLSSRLLQDDRRVTPTCHSSTSEPRCSRFDPDGSGSPATWDNFGIWDNRIDEPILLPPSIKYGKPIPKISLENVGCASQIGKRKENEDRFDFAQLTDEVLYFAVYDGHGGPAAADFCHTHMEKCIMDLLPKEKNLETLLTLAFLEIDKAFSSHARLSADATLLTSGTTATVALLRDGIELVVASVGDSRAILCRKGKPMKLTIDHTPERKDEKERIKKCGGFVAWNSLGQPHVNGRLAMTRSIGDLDLKTSGVIAEPETKRIKLHHADDSFLVLTTDGINFMVNSQEICDFVNQCHDPNEAAHAVTEQAIQYGTEDNSTAVVVPFGAWGKYKNSEINFSFSRSFASSGRWA.

Residues 1-29 (MSTAALITLVRSGGNQVRRRVLLSSRLLQ) constitute a mitochondrion transit peptide. The disordered stretch occupies residues 34-55 (VTPTCHSSTSEPRCSRFDPDGS). The tract at residues 46–61 (RCSRFDPDGSGSPATW) is critical for association with the BCKDH complex. A PPM-type phosphatase domain is found at 94–346 (NVGCASQIGK…DNSTAVVVPF (253 aa)). The Mn(2+) site is built by aspartate 127 and glycine 128. Phosphoserine is present on serine 248. 2 residues coordinate Mn(2+): aspartate 298 and aspartate 337.

It belongs to the PP2C family. In terms of assembly, monomer. Interacts with E1 and E2 components of the branched-chain alpha-ketoacid dehydrogenase (BCKDH) complex; this interaction requires colocalization in mitochondria. Interacts with BCKDHA but not with BCKDHB of the E1 component. Interacts with the 24-meric E2 core composed of DBT monomers with a 24:1 stoichiometry; the N-terminal region (residues 49-61) of PPM1K and C-terminal linker of the lipoyl domain of DBT (residues 145-160) are critical for this interaction, whereas the lipoyl prosthetic group is dispensable. Competes with BCKDK for binding to the E2 core; this interaction is modulated by branched-chain alpha-keto acids. At steady state, BCKDH holoenzyme preferentially binds BCKDK and BCKDHA is phosphorylated. In response to high levels of branched-chain alpha-keto acids, the inhibitory BCKDK is replaced by activating PPM1K leading to BCKDHA dephosphorylation and BCAA degradation. Mn(2+) serves as cofactor.

It is found in the mitochondrion matrix. The enzyme catalyses O-phospho-L-seryl-[3-methyl-2-oxobutanoate dehydrogenase] + H2O = L-seryl-[3-methyl-2-oxobutanoate dehydrogenase] + phosphate. It catalyses the reaction O-phospho-L-seryl-[protein] + H2O = L-seryl-[protein] + phosphate. Its pathway is protein modification. Up-regulated upon interaction with the 24-meric DBT/E2 core of the BCKDH complex. Inhibited by Mg(2+) and Ca(2+) ions likely by competing with Mn(2+) ions for binding to the same metal-binding sites. Functionally, serine/threonine-protein phosphatase component of macronutrients metabolism. Forms a functional kinase and phosphatase pair with BCKDK, serving as a metabolic regulatory node that coordinates branched-chain amino acids (BCAAs) with glucose and lipid metabolism via two distinct phosphoprotein targets: mitochondrial BCKDHA subunit of the branched-chain alpha-ketoacid dehydrogenase (BCKDH) complex and cytosolic ACLY, a lipogenic enzyme of Krebs cycle. At high levels of branched-chain ketoacids, dephosphorylates and activates mitochondrial BCKDH complex, a multisubunit complex consisting of three multimeric components each involved in different steps of BCAA catabolism: E1 composed of BCKDHA and BCKDHB, E2 core composed of DBT monomers, and E3 composed of DLD monomers. Tightly associates with the E2 component of BCKDH complex and dephosphorylates BCKDHA on Ser-337. Regulates the reversible phosphorylation of ACLY in response to changes in cellular carbohydrate abundance such as occurs during fasting to feeding metabolic transition. At fasting state, appears to dephosphorylate ACLY on Ser-455 and inactivate it. Refeeding stimulates MLXIPL/ChREBP transcription factor, leading to increased BCKDK to PPM1K expression ratio, phosphorylation and activation of ACLY that ultimately results in the generation of malonyl-CoA and oxaloacetate immediate substrates of de novo lipogenesis and gluconeogenesis, respectively. Recognizes phosphosites having SxS or RxxS motifs and strictly depends on Mn(2+) ions for the phosphatase activity. Regulates Ca(2+)-induced opening of mitochondrial transition pore and apoptotic cell death. The sequence is that of Protein phosphatase Mn(2+)-dependent 1K from Homo sapiens (Human).